A 150-amino-acid polypeptide reads, in one-letter code: Snaclec 7 (150 aa).

The first 23 residues, 1-23 (MGRFISISFGLLVVFLSLSGTGA), serve as a signal peptide directing secretion. 3 disulfide bridges follow: Cys27-Cys38, Cys55-Cys144, and Cys121-Cys136. In terms of domain architecture, C-type lectin spans 34–145 (YEGYCYKVFN…CNDPRYFVCK (112 aa)).

It belongs to the snaclec family. As to quaternary structure, heterodimer; disulfide-linked.

Its subcellular location is the secreted. Functionally, interferes with one step of hemostasis (modulation of platelet aggregation, or coagulation cascade, for example). In Daboia siamensis (Eastern Russel's viper), this protein is Snaclec 7.